Reading from the N-terminus, the 298-residue chain is Bifunctional protein FolD (298 aa).

Residues Gly-165 to Gly-167, Ser-194, and Ile-235 each bind NADP(+).

Belongs to the tetrahydrofolate dehydrogenase/cyclohydrolase family. In terms of assembly, homodimer.

The enzyme catalyses (6R)-5,10-methylene-5,6,7,8-tetrahydrofolate + NADP(+) = (6R)-5,10-methenyltetrahydrofolate + NADPH. It catalyses the reaction (6R)-5,10-methenyltetrahydrofolate + H2O = (6R)-10-formyltetrahydrofolate + H(+). It functions in the pathway one-carbon metabolism; tetrahydrofolate interconversion. Catalyzes the oxidation of 5,10-methylenetetrahydrofolate to 5,10-methenyltetrahydrofolate and then the hydrolysis of 5,10-methenyltetrahydrofolate to 10-formyltetrahydrofolate. The polypeptide is Bifunctional protein FolD (Amoebophilus asiaticus (strain 5a2)).